The primary structure comprises 130 residues: Large ribosomal subunit protein bL17 (130 aa).

The protein belongs to the bacterial ribosomal protein bL17 family. As to quaternary structure, part of the 50S ribosomal subunit. Contacts protein L32.

The sequence is that of Large ribosomal subunit protein bL17 from Shewanella pealeana (strain ATCC 700345 / ANG-SQ1).